Here is a 100-residue protein sequence, read N- to C-terminus: Urease subunit gamma (100 aa).

Belongs to the urease gamma subunit family. As to quaternary structure, heterotrimer of UreA (gamma), UreB (beta) and UreC (alpha) subunits. Three heterotrimers associate to form the active enzyme.

It localises to the cytoplasm. It carries out the reaction urea + 2 H2O + H(+) = hydrogencarbonate + 2 NH4(+). The protein operates within nitrogen metabolism; urea degradation; CO(2) and NH(3) from urea (urease route): step 1/1. This is Urease subunit gamma from Ruegeria pomeroyi (strain ATCC 700808 / DSM 15171 / DSS-3) (Silicibacter pomeroyi).